We begin with the raw amino-acid sequence, 487 residues long: Bifunctional protein HldE (487 aa).

A ribokinase region spans residues 1 to 329 (MLHAVETAFY…GALLTDATYE (329 aa)). An ATP-binding site is contributed by 204-207 (NRGE). Aspartate 274 is an active-site residue. Positions 356–487 (FTNGCFDLLH…GIVQRISAQK (132 aa)) are cytidylyltransferase.

The protein in the N-terminal section; belongs to the carbohydrate kinase PfkB family. In the C-terminal section; belongs to the cytidylyltransferase family. As to quaternary structure, homodimer.

It carries out the reaction D-glycero-beta-D-manno-heptose 7-phosphate + ATP = D-glycero-beta-D-manno-heptose 1,7-bisphosphate + ADP + H(+). It catalyses the reaction D-glycero-beta-D-manno-heptose 1-phosphate + ATP + H(+) = ADP-D-glycero-beta-D-manno-heptose + diphosphate. The protein operates within nucleotide-sugar biosynthesis; ADP-L-glycero-beta-D-manno-heptose biosynthesis; ADP-L-glycero-beta-D-manno-heptose from D-glycero-beta-D-manno-heptose 7-phosphate: step 1/4. It functions in the pathway nucleotide-sugar biosynthesis; ADP-L-glycero-beta-D-manno-heptose biosynthesis; ADP-L-glycero-beta-D-manno-heptose from D-glycero-beta-D-manno-heptose 7-phosphate: step 3/4. Catalyzes the phosphorylation of D-glycero-D-manno-heptose 7-phosphate at the C-1 position to selectively form D-glycero-beta-D-manno-heptose-1,7-bisphosphate. Its function is as follows. Catalyzes the ADP transfer from ATP to D-glycero-beta-D-manno-heptose 1-phosphate, yielding ADP-D-glycero-beta-D-manno-heptose. This is Bifunctional protein HldE from Magnetococcus marinus (strain ATCC BAA-1437 / JCM 17883 / MC-1).